The following is a 146-amino-acid chain: Hemoglobin subunit beta (146 aa).

Val1 carries the N-acetylvaline modification. The region spanning 2–146 (HLTDAEKAAI…VASALAHKYH (145 aa)) is the Globin domain. Residue His63 coordinates heme b. The residue at position 82 (Lys82) is an N6-acetyllysine. Residue His92 coordinates heme b. S-nitrosocysteine is present on Cys93. Lys144 carries the post-translational modification N6-acetyllysine.

This sequence belongs to the globin family. Heterotetramer of two alpha chains and two beta chains. As to expression, red blood cells.

Its function is as follows. Involved in oxygen transport from the lung to the various peripheral tissues. In Microtus xanthognathus (Yellow-cheeked vole), this protein is Hemoglobin subunit beta (HBB).